The primary structure comprises 835 residues: Ubiquitin carboxyl-terminal hydrolase 26 (835 aa).

Residues 102 to 128 form a disordered region; sequence SQGSIRPARSDERCGEPSTSAQELNGS. Over residues 118–128 the composition is skewed to polar residues; that stretch reads PSTSAQELNGS. The USP domain occupies 286–816; that stretch reads QGLPNVGNTC…TGYVFFYMHN (531 aa). The active-site Nucleophile is the Cys295. The interval 597-747 is disordered; the sequence is NRESEAQSGK…TRKVDPTKLN (151 aa). 2 stretches are compositionally biased toward basic and acidic residues: residues 634–652 and 669–679; these read LTKE…RPSD and KCNEGRSDKQI. Over residues 683–708 the composition is skewed to polar residues; it reads ALTQSRPKPISQEQTENLGKTTLSHT. Low complexity predominate over residues 709 to 725; that stretch reads QDSSQSSQSSSDSSKSS. Over residues 726 to 747 the composition is skewed to basic and acidic residues; sequence RCSDDLDKKAKPTRKVDPTKLN. Residue His771 is the Proton acceptor of the active site.

It belongs to the peptidase C19 family. In terms of assembly, interacts with RING1.

Its subcellular location is the nucleus. It localises to the cytoplasm. The protein resides in the cytoskeleton. The protein localises to the flagellum axoneme. The enzyme catalyses Thiol-dependent hydrolysis of ester, thioester, amide, peptide and isopeptide bonds formed by the C-terminal Gly of ubiquitin (a 76-residue protein attached to proteins as an intracellular targeting signal).. In terms of biological role, deubiquitinase regulating several biological processes through the deubiquitination of components of these processes. Involved in somatic cell reprogramming through the 'Lys-48'-linked deubiquitination and stabilization of CBX4 and CBX6, two components of the polycomb-repressive complex 1 (PRC1). Also deubiquitinates and probably stabilizes the androgen receptor (AR), regulating the androgen receptor signaling pathway. May play a role in spermatogenesis. The protein is Ubiquitin carboxyl-terminal hydrolase 26 of Mus musculus (Mouse).